Here is a 225-residue protein sequence, read N- to C-terminus: Uridylate kinase (225 aa).

9-10 (GS) provides a ligand contact to ATP. G46 contributes to the UMP binding site. G47 and R51 together coordinate ATP. Residues D67 and 115–121 (THPAHTT) each bind UMP. Residues T141, N142, Y147, and D150 each contribute to the ATP site.

Belongs to the UMP kinase family. As to quaternary structure, homohexamer.

The protein localises to the cytoplasm. It carries out the reaction UMP + ATP = UDP + ADP. Its pathway is pyrimidine metabolism; CTP biosynthesis via de novo pathway; UDP from UMP (UMPK route): step 1/1. With respect to regulation, inhibited by UTP. In terms of biological role, catalyzes the reversible phosphorylation of UMP to UDP. This chain is Uridylate kinase, found in Methanococcus maripaludis (strain DSM 14266 / JCM 13030 / NBRC 101832 / S2 / LL).